The chain runs to 89 residues: Sec-independent protein translocase protein TatA (89 aa).

Residues 1–21 (MFGLSPAQLIILLVVILLIFG) form a helical membrane-spanning segment.

It belongs to the TatA/E family. In terms of assembly, the Tat system comprises two distinct complexes: a TatABC complex, containing multiple copies of TatA, TatB and TatC subunits, and a separate TatA complex, containing only TatA subunits. Substrates initially bind to the TatABC complex, which probably triggers association of the separate TatA complex to form the active translocon.

It localises to the cell inner membrane. Part of the twin-arginine translocation (Tat) system that transports large folded proteins containing a characteristic twin-arginine motif in their signal peptide across membranes. TatA could form the protein-conducting channel of the Tat system. The polypeptide is Sec-independent protein translocase protein TatA (Haemophilus influenzae (strain ATCC 51907 / DSM 11121 / KW20 / Rd)).